A 671-amino-acid polypeptide reads, in one-letter code: UvrABC system protein B (671 aa).

One can recognise a Helicase ATP-binding domain in the interval 25–178 (EGIKKGYKHQ…DAMLKKLVEI (154 aa)). An ATP-binding site is contributed by 38-45 (GVTGSGKT). The Beta-hairpin signature appears at 91-114 (YYDYYQPEAYIPETDTYIEKDALI). Residues 435 to 601 (QVEDLLEEIH…TVKSKIKDIL (167 aa)) enclose the Helicase C-terminal domain. Positions 626 to 661 (EETIKKLEQEMKHAAENLEFEKAAEIRDKIFKIKEK) constitute a UVR domain.

Belongs to the UvrB family. In terms of assembly, forms a heterotetramer with UvrA during the search for lesions. Interacts with UvrC in an incision complex.

It is found in the cytoplasm. Its function is as follows. The UvrABC repair system catalyzes the recognition and processing of DNA lesions. A damage recognition complex composed of 2 UvrA and 2 UvrB subunits scans DNA for abnormalities. Upon binding of the UvrA(2)B(2) complex to a putative damaged site, the DNA wraps around one UvrB monomer. DNA wrap is dependent on ATP binding by UvrB and probably causes local melting of the DNA helix, facilitating insertion of UvrB beta-hairpin between the DNA strands. Then UvrB probes one DNA strand for the presence of a lesion. If a lesion is found the UvrA subunits dissociate and the UvrB-DNA preincision complex is formed. This complex is subsequently bound by UvrC and the second UvrB is released. If no lesion is found, the DNA wraps around the other UvrB subunit that will check the other stand for damage. In Thermodesulfovibrio yellowstonii (strain ATCC 51303 / DSM 11347 / YP87), this protein is UvrABC system protein B.